The primary structure comprises 279 residues: Homeobox protein BarH-like 2 (279 aa).

Disordered regions lie at residues 110 to 137 and 194 to 279; these read APGG…RRSR and KGGQ…PPLS. Polar residues predominate over residues 118–128; sequence SSESETEQPTP. The homeobox DNA-binding region spans 133–192; the sequence is PRRSRTIFTELQLMGLEKKFQKQKYLSTPDRLDLAQSLGLTQLQVKTWYQNRRMKWKKMV. The segment covering 225–240 has biased composition (polar residues); sequence NSQAQGQEQLEPSQGQ. Pro residues predominate over residues 261–279; that stretch reads PPDPPQELPIPSSEPPPLS.

This sequence belongs to the BAR homeobox family. As to expression, highly expressed in adult salivary gland and at much lower levels in mammary gland, kidney and placenta.

The protein resides in the nucleus. In terms of biological role, transcription factor. Binds optimally to the DNA consensus sequence 5'-YYTAATGRTTTTY-3'. May control the expression of neural adhesion molecules such as L1 or Ng-CAM during embryonic development of both the central and peripherical nervous system. May be involved in controlling adhesive processes in keratinizing epithelia. This is Homeobox protein BarH-like 2 (BARX2) from Homo sapiens (Human).